The sequence spans 456 residues: tRNA modification GTPase MnmE (456 aa).

Residues Arg24, Glu81, and Lys120 each coordinate (6S)-5-formyl-5,6,7,8-tetrahydrofolate. The region spanning 216 to 379 (GMTVVIAGRP…LRDHLKACMG (164 aa)) is the TrmE-type G domain. Asn226 contributes to the K(+) binding site. GTP contacts are provided by residues 226 to 231 (NAGKSS), 245 to 251 (TDIAGTT), 270 to 273 (DTAG), 335 to 338 (NKAD), and 359 to 361 (SAR). Ser230 provides a ligand contact to Mg(2+). Residues Thr245, Ile247, and Thr250 each coordinate K(+). Thr251 contributes to the Mg(2+) binding site. Position 456 (Lys456) interacts with (6S)-5-formyl-5,6,7,8-tetrahydrofolate.

Belongs to the TRAFAC class TrmE-Era-EngA-EngB-Septin-like GTPase superfamily. TrmE GTPase family. In terms of assembly, homodimer. Heterotetramer of two MnmE and two MnmG subunits. It depends on K(+) as a cofactor.

It localises to the cytoplasm. In terms of biological role, exhibits a very high intrinsic GTPase hydrolysis rate. Involved in the addition of a carboxymethylaminomethyl (cmnm) group at the wobble position (U34) of certain tRNAs, forming tRNA-cmnm(5)s(2)U34. This chain is tRNA modification GTPase MnmE, found in Pseudomonas entomophila (strain L48).